Consider the following 283-residue polypeptide: Interferon alpha-inducible protein 27-like protein 2B (283 aa).

A mitochondrion-targeting transit peptide spans 1-90 (MKRKFVGAAI…AVGTATGARA (90 aa)). The tract at residues 90–120 (AEGSMGASREQESGPQDPPQELQEPQEPPSC) is disordered. 3 helical membrane passes run 130-150 (FVGA…ALSA), 176-196 (GGGI…ILGL), and 202-222 (IILG…MGAC). A disordered region spans residues 227–283 (PGLQDLQQEPKEPQEPQELQKQQEPQEPQELQKQQETQETQETQELQKTQEPPSYEK). Residues 242–283 (PQELQKQQEPQEPQELQKQQETQETQETQELQKTQEPPSYEK) show a composition bias toward low complexity.

The protein belongs to the IFI6/IFI27 family. In terms of assembly, homooligomer. Interacts with BAK1. Interacts with BAX. Interacts with adenine nucleotide translocase.

It localises to the mitochondrion inner membrane. Functions in the intrinsic apoptotic signaling pathway and may have an interferon-induced antiviral activity. In Mus musculus (Mouse), this protein is Interferon alpha-inducible protein 27-like protein 2B.